The chain runs to 129 residues: MKIEKMNFYSPKKYKWKGIKITEQAIEQILFLINKNPKNKGIRIGTKKSGCAGFRYTMELVKNNTIEKENKNDIVFYYNNILVYISLKEAPFLNGIKIDFVKDSINEVFKYCNPRIKTFCGCGESFSID.

The protein belongs to the HesB/IscA family.

This is an uncharacterized protein from Buchnera aphidicola subsp. Schizaphis graminum (strain Sg).